Here is a 1183-residue protein sequence, read N- to C-terminus: Chromosome partition protein Smc (1183 aa).

32 to 39 (PNGCGKTN) contacts ATP. Coiled coils occupy residues 167–322 (ITRY…ERLN) and 358–497 (AEFE…ALCN). The interval 409-442 (KEHLEGSVNRLDQRKRDLERSMEQAEPERRRTSE) is disordered. Residues 419 to 442 (LDQRKRDLERSMEQAEPERRRTSE) show a composition bias toward basic and acidic residues. In terms of domain architecture, SMC hinge spans 523–632 (LGCLSDLISV…VADLDAAEQL (110 aa)). 2 coiled-coil regions span residues 669 to 941 (GKKA…VMER) and 980 to 1025 (NELA…ALEK).

Belongs to the SMC family. As to quaternary structure, homodimer.

It localises to the cytoplasm. In terms of biological role, required for chromosome condensation and partitioning. The protein is Chromosome partition protein Smc of Chlorobaculum tepidum (strain ATCC 49652 / DSM 12025 / NBRC 103806 / TLS) (Chlorobium tepidum).